Consider the following 150-residue polypeptide: Transcriptional repressor NrdR (150 aa).

Residues C3–C34 fold into a zinc finger. In terms of domain architecture, ATP-cone spans P49–E139.

The protein belongs to the NrdR family. Zn(2+) is required as a cofactor.

In terms of biological role, negatively regulates transcription of bacterial ribonucleotide reductase nrd genes and operons by binding to NrdR-boxes. The sequence is that of Transcriptional repressor NrdR from Citrifermentans bemidjiense (strain ATCC BAA-1014 / DSM 16622 / JCM 12645 / Bem) (Geobacter bemidjiensis).